The following is a 200-amino-acid chain: Glycerol-3-phosphate acyltransferase (200 aa).

5 helical membrane passes run 1–21 (MLLS…MPNG), 53–73 (GPAL…VLLA), 81–101 (WVQV…VWLG), 114–134 (MFLG…MAVI), and 139–159 (IVSL…LTSG).

It belongs to the PlsY family. Probably interacts with PlsX.

Its subcellular location is the cell inner membrane. The catalysed reaction is an acyl phosphate + sn-glycerol 3-phosphate = a 1-acyl-sn-glycero-3-phosphate + phosphate. Its pathway is lipid metabolism; phospholipid metabolism. Functionally, catalyzes the transfer of an acyl group from acyl-phosphate (acyl-PO(4)) to glycerol-3-phosphate (G3P) to form lysophosphatidic acid (LPA). This enzyme utilizes acyl-phosphate as fatty acyl donor, but not acyl-CoA or acyl-ACP. In Synechococcus sp. (strain CC9902), this protein is Glycerol-3-phosphate acyltransferase.